A 349-amino-acid polypeptide reads, in one-letter code: Protein-glutamate methylesterase/protein-glutamine glutaminase (349 aa).

The Response regulatory domain occupies 5-122 (RVLSVDDSAL…REGMLAYSEM (118 aa)). D56 bears the 4-aspartylphosphate mark. A CheB-type methylesterase domain is found at 152-344 (LLSSEKLIAI…QQMLAKISAG (193 aa)). Catalysis depends on residues S164, H190, and D286.

Belongs to the CheB family. Phosphorylated by CheA. Phosphorylation of the N-terminal regulatory domain activates the methylesterase activity.

The protein localises to the cytoplasm. The catalysed reaction is [protein]-L-glutamate 5-O-methyl ester + H2O = L-glutamyl-[protein] + methanol + H(+). It catalyses the reaction L-glutaminyl-[protein] + H2O = L-glutamyl-[protein] + NH4(+). Functionally, involved in chemotaxis. Part of a chemotaxis signal transduction system that modulates chemotaxis in response to various stimuli. Catalyzes the demethylation of specific methylglutamate residues introduced into the chemoreceptors (methyl-accepting chemotaxis proteins or MCP) by CheR. Also mediates the irreversible deamidation of specific glutamine residues to glutamic acid. The chain is Protein-glutamate methylesterase/protein-glutamine glutaminase from Escherichia coli O6:H1 (strain CFT073 / ATCC 700928 / UPEC).